The primary structure comprises 502 residues: Glycerol kinase (502 aa).

T14 serves as a coordination point for ADP. 3 residues coordinate ATP: T14, T15, and S16. Residue T14 coordinates sn-glycerol 3-phosphate. R18 is a binding site for ADP. Sn-glycerol 3-phosphate is bound by residues R84, E85, and Y136. Positions 84, 85, and 136 each coordinate glycerol. H232 bears the Phosphohistidine; by HPr mark. D246 contributes to the sn-glycerol 3-phosphate binding site. Residues D246 and Q247 each coordinate glycerol. ADP contacts are provided by T268 and G311. ATP contacts are provided by T268, G311, Q315, and G412. Positions 412 and 416 each coordinate ADP.

It belongs to the FGGY kinase family. Homotetramer and homodimer (in equilibrium). The phosphoenolpyruvate-dependent sugar phosphotransferase system (PTS), including enzyme I, and histidine-containing protein (HPr) are required for the phosphorylation, which leads to the activation of the enzyme.

It catalyses the reaction glycerol + ATP = sn-glycerol 3-phosphate + ADP + H(+). It functions in the pathway polyol metabolism; glycerol degradation via glycerol kinase pathway; sn-glycerol 3-phosphate from glycerol: step 1/1. With respect to regulation, activated by phosphorylation and inhibited by fructose 1,6-bisphosphate (FBP). In terms of biological role, key enzyme in the regulation of glycerol uptake and metabolism. Catalyzes the phosphorylation of glycerol to yield sn-glycerol 3-phosphate. This chain is Glycerol kinase, found in Streptococcus pneumoniae (strain ATCC 700669 / Spain 23F-1).